The primary structure comprises 351 residues: D-glucoside 3-dehydrogenase (351 aa).

It belongs to the Gfo/Idh/MocA family.

The enzyme catalyses a D-glucoside + NAD(+) = a 3-dehydro-D-glucoside + NADH + H(+). In terms of biological role, catalyzes the NADH-dependent reduction of the oxo group at C3 of 3-dehydro-D-glucosides leading to D-glucosides. Probably functions in a metabolic pathway that transforms D-gulosides to D-glucosides. Can use 3-dehydro-D-glucose, methyl alpha-3-dehydro-D-glucoside and methyl beta-3-dehydro-D-glucoside as substrates in vitro. However, the actual specific physiological substrates for this metabolic pathway are unknown. To a lesser extent, is also able to catalyze the reverse reactions, i.e. the NAD(+)-dependent oxidation of the hydroxyl group at C3 of D-glucosides leading to 3-dehydro-D-glucosides. Cannot act on UDP-glucose, UDP-N-acetyl-D-glucosamine, D-glucosamine, N-acetyl-D-glucosamine, or UDP-D-galactose. In Escherichia coli (strain K12), this protein is D-glucoside 3-dehydrogenase (ycjS).